The following is a 387-amino-acid chain: Probable serine protease FE772_23060 (387 aa).

The protein belongs to the peptidase S1 family.

Possibly a dedicated protease for substrate gasdermin bGSDM; cleaves the bGSDM precursor, releasing the pore-forming moiety, which integrates into the membrane and triggers cell death. Involved in defense against bacteriophages. When this probable 4 gene operon (bGSDM-FE772_23060-FE772_23065-FE772_23070) is inserted into E.coli it provides nearly 100-fold protection against phages T5 and T6 and about 8-fold against phage T4. The operon without bGSDM no longer protects against phage. This is Probable serine protease FE772_23060 from Lysobacter enzymogenes.